The following is a 212-amino-acid chain: ATP-dependent dethiobiotin synthetase BioD (212 aa).

Glycine 13–valine 18 is an ATP binding site. Residue threonine 17 coordinates Mg(2+). Residue lysine 33 is part of the active site. Substrate is bound at residue serine 37. Glutamate 100 is a Mg(2+) binding site. ATP-binding positions include glutamate 100–glycine 103 and proline 184–leucine 186.

This sequence belongs to the dethiobiotin synthetase family. Homodimer. Requires Mg(2+) as cofactor.

The protein resides in the cytoplasm. The enzyme catalyses (7R,8S)-7,8-diammoniononanoate + CO2 + ATP = (4R,5S)-dethiobiotin + ADP + phosphate + 3 H(+). It participates in cofactor biosynthesis; biotin biosynthesis; biotin from 7,8-diaminononanoate: step 1/2. Functionally, catalyzes a mechanistically unusual reaction, the ATP-dependent insertion of CO2 between the N7 and N8 nitrogen atoms of 7,8-diaminopelargonic acid (DAPA, also called 7,8-diammoniononanoate) to form a ureido ring. This Rhodopseudomonas palustris (strain TIE-1) protein is ATP-dependent dethiobiotin synthetase BioD.